The primary structure comprises 409 residues: Elongation factor Tu (409 aa).

The tr-type G domain occupies 10–214; that stretch reads KPHVNIGTIG…EVDAYIPEPE (205 aa). The segment at 19 to 26 is G1; sequence GHVDHGKT. Residue 19–26 participates in GTP binding; it reads GHVDHGKT. A Mg(2+)-binding site is contributed by Thr26. The tract at residues 60-64 is G2; that stretch reads GITIN. A G3 region spans residues 81-84; that stretch reads DCPG. GTP contacts are provided by residues 81–85 and 136–139; these read DCPGH and NKQD. A G4 region spans residues 136 to 139; that stretch reads NKQD. The interval 174–176 is G5; sequence SAL.

This sequence belongs to the TRAFAC class translation factor GTPase superfamily. Classic translation factor GTPase family. EF-Tu/EF-1A subfamily. In terms of assembly, monomer.

The protein resides in the cytoplasm. It carries out the reaction GTP + H2O = GDP + phosphate + H(+). Its function is as follows. GTP hydrolase that promotes the GTP-dependent binding of aminoacyl-tRNA to the A-site of ribosomes during protein biosynthesis. This Rippkaea orientalis (strain PCC 8801 / RF-1) (Cyanothece sp. (strain PCC 8801)) protein is Elongation factor Tu.